Reading from the N-terminus, the 99-residue chain is Large ribosomal subunit protein uL23 (99 aa).

It belongs to the universal ribosomal protein uL23 family. In terms of assembly, part of the 50S ribosomal subunit. Contacts protein L29, and trigger factor when it is bound to the ribosome.

One of the early assembly proteins it binds 23S rRNA. One of the proteins that surrounds the polypeptide exit tunnel on the outside of the ribosome. Forms the main docking site for trigger factor binding to the ribosome. The sequence is that of Large ribosomal subunit protein uL23 from Haemophilus influenzae (strain 86-028NP).